A 351-amino-acid chain; its full sequence is L-threonine 3-dehydrogenase (351 aa).

A Zn(2+)-binding site is contributed by cysteine 39. Active-site charge relay system residues include threonine 41 and histidine 44. Residues histidine 64, glutamate 65, cysteine 94, cysteine 97, cysteine 100, and cysteine 108 each contribute to the Zn(2+) site. Residues isoleucine 176, aspartate 196, arginine 201, 271-273, and 295-296 contribute to the NAD(+) site; these read LGI and IY.

This sequence belongs to the zinc-containing alcohol dehydrogenase family. As to quaternary structure, homotetramer. Requires Zn(2+) as cofactor.

The protein resides in the cytoplasm. It catalyses the reaction L-threonine + NAD(+) = (2S)-2-amino-3-oxobutanoate + NADH + H(+). The protein operates within amino-acid degradation; L-threonine degradation via oxydo-reductase pathway; glycine from L-threonine: step 1/2. Its function is as follows. Catalyzes the NAD(+)-dependent oxidation of L-threonine to 2-amino-3-ketobutyrate. The polypeptide is L-threonine 3-dehydrogenase (Francisella tularensis subsp. novicida (strain U112)).